We begin with the raw amino-acid sequence, 431 residues long: Enolase (431 aa).

A (2R)-2-phosphoglycerate-binding site is contributed by glutamine 166. Residue glutamate 208 is the Proton donor of the active site. The Mg(2+) site is built by aspartate 245, glutamate 288, and aspartate 315. Residues lysine 340, arginine 369, serine 370, and lysine 391 each contribute to the (2R)-2-phosphoglycerate site. The Proton acceptor role is filled by lysine 340.

This sequence belongs to the enolase family. Requires Mg(2+) as cofactor.

The protein resides in the cytoplasm. Its subcellular location is the secreted. It localises to the cell surface. It catalyses the reaction (2R)-2-phosphoglycerate = phosphoenolpyruvate + H2O. The protein operates within carbohydrate degradation; glycolysis; pyruvate from D-glyceraldehyde 3-phosphate: step 4/5. In terms of biological role, catalyzes the reversible conversion of 2-phosphoglycerate (2-PG) into phosphoenolpyruvate (PEP). It is essential for the degradation of carbohydrates via glycolysis. The polypeptide is Enolase (Clostridium tetani (strain Massachusetts / E88)).